The following is a 170-amino-acid chain: S-ribosylhomocysteine lyase (170 aa).

Fe cation-binding residues include H54, H58, and C128.

Belongs to the LuxS family. Homodimer. The cofactor is Fe cation.

The catalysed reaction is S-(5-deoxy-D-ribos-5-yl)-L-homocysteine = (S)-4,5-dihydroxypentane-2,3-dione + L-homocysteine. Functionally, involved in the synthesis of autoinducer 2 (AI-2) which is secreted by bacteria and is used to communicate both the cell density and the metabolic potential of the environment. The regulation of gene expression in response to changes in cell density is called quorum sensing. Catalyzes the transformation of S-ribosylhomocysteine (RHC) to homocysteine (HC) and 4,5-dihydroxy-2,3-pentadione (DPD). This is S-ribosylhomocysteine lyase from Marinomonas sp. (strain MWYL1).